Consider the following 421-residue polypeptide: 4-methylaminobutanoate oxidase (methylamine-forming) (421 aa).

The FAD site is built by Glu31, Arg33, Arg39, and Glu379.

The protein belongs to the flavin monoamine oxidase family. Monomer. Requires FAD as cofactor.

The catalysed reaction is 4-(methylamino)butanoate + O2 + H2O = succinate semialdehyde + methylamine + H2O2. Its pathway is alkaloid degradation; nicotine degradation. Its function is as follows. Catalyzes the removal of methylamine from 4-methylaminobutanoate with the formation of succinate semialdehyde. Is involved in the catabolism of 4-methylaminobutanoate produced from nicotine. Has a very weak monoamine oxidase activity with 4-aminobutanoate. Cannot use spermidine, spermine, sarcosine, dimethylglycine, glycine, choline, betaine, alpha-methylamino isobutyrate, methylamine propionitrile and methylamino propylamine as substrate. The protein is 4-methylaminobutanoate oxidase (methylamine-forming) (mao) of Paenarthrobacter nicotinovorans (Arthrobacter nicotinovorans).